Reading from the N-terminus, the 428-residue chain is Cytochrome P450-terp (428 aa).

Cys-377 contributes to the heme binding site.

The protein belongs to the cytochrome P450 family. Heme serves as cofactor.

It localises to the cytoplasm. Its function is as follows. Catalyzes the hydroxylation of alpha-terpineol. In Pseudomonas sp, this protein is Cytochrome P450-terp (cyp108).